We begin with the raw amino-acid sequence, 238 residues long: tRNA (guanine-N(7)-)-methyltransferase (238 aa).

4 residues coordinate S-adenosyl-L-methionine: Glu-68, Glu-93, Asp-120, and Asp-143. Residue Asp-143 is part of the active site. Residues Lys-147, Asp-179, and Thr-216–Glu-219 contribute to the substrate site.

Belongs to the class I-like SAM-binding methyltransferase superfamily. TrmB family.

It catalyses the reaction guanosine(46) in tRNA + S-adenosyl-L-methionine = N(7)-methylguanosine(46) in tRNA + S-adenosyl-L-homocysteine. The protein operates within tRNA modification; N(7)-methylguanine-tRNA biosynthesis. In terms of biological role, catalyzes the formation of N(7)-methylguanine at position 46 (m7G46) in tRNA. The protein is tRNA (guanine-N(7)-)-methyltransferase of Shewanella baltica (strain OS155 / ATCC BAA-1091).